A 198-amino-acid polypeptide reads, in one-letter code: Nucleoside triphosphate pyrophosphatase (198 aa).

Aspartate 72 (proton acceptor) is an active-site residue.

It belongs to the Maf family. It depends on a divalent metal cation as a cofactor.

Its subcellular location is the cytoplasm. It carries out the reaction a ribonucleoside 5'-triphosphate + H2O = a ribonucleoside 5'-phosphate + diphosphate + H(+). It catalyses the reaction a 2'-deoxyribonucleoside 5'-triphosphate + H2O = a 2'-deoxyribonucleoside 5'-phosphate + diphosphate + H(+). Nucleoside triphosphate pyrophosphatase. May have a dual role in cell division arrest and in preventing the incorporation of modified nucleotides into cellular nucleic acids. The sequence is that of Nucleoside triphosphate pyrophosphatase from Acinetobacter baylyi (strain ATCC 33305 / BD413 / ADP1).